Reading from the N-terminus, the 92-residue chain is Large ribosomal subunit protein bL25 (92 aa).

Belongs to the bacterial ribosomal protein bL25 family. Part of the 50S ribosomal subunit; part of the 5S rRNA/L5/L18/L25 subcomplex. Contacts the 5S rRNA. Binds to the 5S rRNA independently of L5 and L18.

This is one of the proteins that binds to the 5S RNA in the ribosome where it forms part of the central protuberance. The chain is Large ribosomal subunit protein bL25 from Aliivibrio fischeri (strain MJ11) (Vibrio fischeri).